Consider the following 36-residue polypeptide: Allergen Act d 3 (36 aa).

N-glycosylated.

The sequence is that of Allergen Act d 3 from Actinidia deliciosa (Kiwi).